The chain runs to 165 residues: Xanthine-guanine phosphoribosyltransferase (165 aa).

5-phospho-alpha-D-ribose 1-diphosphate contacts are provided by residues 41 to 42 and 98 to 106; these read RG and DDLTDTGKT. Aspartate 99 contacts Mg(2+). The guanine site is built by aspartate 102 and isoleucine 145. Residues aspartate 102 and isoleucine 145 each contribute to the xanthine site. Residues 102 to 106 and 144 to 145 each bind GMP; these read DTGKT and WI.

It belongs to the purine/pyrimidine phosphoribosyltransferase family. XGPT subfamily. In terms of assembly, homotetramer. Requires Mg(2+) as cofactor.

It is found in the cell inner membrane. The enzyme catalyses GMP + diphosphate = guanine + 5-phospho-alpha-D-ribose 1-diphosphate. The catalysed reaction is XMP + diphosphate = xanthine + 5-phospho-alpha-D-ribose 1-diphosphate. It catalyses the reaction IMP + diphosphate = hypoxanthine + 5-phospho-alpha-D-ribose 1-diphosphate. It functions in the pathway purine metabolism; GMP biosynthesis via salvage pathway; GMP from guanine: step 1/1. It participates in purine metabolism; XMP biosynthesis via salvage pathway; XMP from xanthine: step 1/1. Purine salvage pathway enzyme that catalyzes the transfer of the ribosyl-5-phosphate group from 5-phospho-alpha-D-ribose 1-diphosphate (PRPP) to the N9 position of the 6-oxopurines guanine and xanthine to form the corresponding ribonucleotides GMP (guanosine 5'-monophosphate) and XMP (xanthosine 5'-monophosphate), with the release of PPi. To a lesser extent, also acts on hypoxanthine. The sequence is that of Xanthine-guanine phosphoribosyltransferase from Chelativorans sp. (strain BNC1).